The sequence spans 236 residues: Bidirectional sugar transporter SWEET2 (236 aa).

Over methionine 1–aspartate 15 the chain is Extracellular. Asparagine 7 is a glycosylation site (N-linked (GlcNAc...) asparagine). The chain crosses the membrane as a helical span at residues valine 16 to phenylalanine 36. Residues glycine 18–lysine 103 enclose the MtN3/slv 1 domain. Over arginine 37–glycine 50 the chain is Cytoplasmic. The chain crosses the membrane as a helical span at residues leucine 51 to isoleucine 71. Residues serine 72 to alanine 76 are Extracellular-facing. A helical membrane pass occupies residues methionine 77–isoleucine 97. The Cytoplasmic portion of the chain corresponds to methionine 98–methionine 108. Residues leucine 109 to isoleucine 129 traverse the membrane as a helical segment. At proline 130–tyrosine 137 the chain is on the extracellular side. A helical membrane pass occupies residues phenylalanine 138–isoleucine 158. Residues phenylalanine 138–asparagine 221 form the MtN3/slv 2 domain. Topologically, residues asparagine 159–methionine 170 are cytoplasmic. Residues proline 171–phenylalanine 191 traverse the membrane as a helical segment. At asparagine 192 to aspartate 194 the chain is on the extracellular side. A helical membrane pass occupies residues alanine 195–tyrosine 215. The Cytoplasmic portion of the chain corresponds to cysteine 216–valine 236.

It belongs to the SWEET sugar transporter family. Forms heterooligomers with SWEET17.

The protein resides in the cell membrane. In terms of biological role, mediates both low-affinity uptake and efflux of sugar across the plasma membrane. The polypeptide is Bidirectional sugar transporter SWEET2 (Arabidopsis thaliana (Mouse-ear cress)).